The chain runs to 209 residues: Probable glutathione peroxidase 8-B (209 aa).

Residues 18-40 (VFLVFFSMVLCTGILCVLQLKFL) traverse the membrane as a helical segment. C79 is an active-site residue.

It belongs to the glutathione peroxidase family.

The protein localises to the membrane. The enzyme catalyses 2 glutathione + H2O2 = glutathione disulfide + 2 H2O. This Xenopus laevis (African clawed frog) protein is Probable glutathione peroxidase 8-B (gpx8-b).